Consider the following 145-residue polypeptide: Large ribosomal subunit protein uL15 (145 aa).

The tract at residues 1–52 is disordered; the sequence is MRLNTLSPAAGSKRVKHRPGRGIGSGLGKTGGRGVKGQTSRSGGGKVRNGFE. Gly residues-rich tracts occupy residues 21-35 and 42-52; these read RGIG…GRGV and SGGGKVRNGFE.

The protein belongs to the universal ribosomal protein uL15 family. In terms of assembly, part of the 50S ribosomal subunit.

In terms of biological role, binds to the 23S rRNA. This Aeromonas hydrophila subsp. hydrophila (strain ATCC 7966 / DSM 30187 / BCRC 13018 / CCUG 14551 / JCM 1027 / KCTC 2358 / NCIMB 9240 / NCTC 8049) protein is Large ribosomal subunit protein uL15.